A 577-amino-acid polypeptide reads, in one-letter code: Cytidine monophosphate-N-acetylneuraminic acid hydroxylase (577 aa).

A propeptide spanning residues 1–4 (MMDR) is cleaved from the precursor. The 99-residue stretch at 14–112 (LSPAEVANLK…IEMDENNGLS (99 aa)) folds into the Rieske domain. Cys54, His56, Cys75, and His78 together coordinate [2Fe-2S] cluster.

This sequence belongs to the CMP-Neu5Ac hydroxylase family. The cofactor is [2Fe-2S] cluster. In terms of tissue distribution, expressed in all tissues tested, except in brain.

The protein resides in the cytoplasm. It localises to the endoplasmic reticulum. The catalysed reaction is CMP-N-acetyl-beta-neuraminate + 2 Fe(II)-[cytochrome b5] + O2 + 2 H(+) = CMP-N-glycoloyl-beta-neuraminate + 2 Fe(III)-[cytochrome b5] + H2O. Its pathway is amino-sugar metabolism; N-acetylneuraminate metabolism. Sialic acids are components of carbohydrate chains of glycoconjugates and are involved in cell-cell recognition and cell-pathogen interactions. Catalyzes the conversion of CMP-N-acetylneuraminic acid (CMP-Neu5Ac) into its hydroxylated derivative CMP-N-glycolylneuraminic acid (CMP-Neu5Gc), a sialic acid abundantly expressed at the surface of many cells. In Mus musculus (Mouse), this protein is Cytidine monophosphate-N-acetylneuraminic acid hydroxylase (Cmah).